The following is a 383-amino-acid chain: Lipid-A-disaccharide synthase (383 aa).

The protein belongs to the LpxB family.

The enzyme catalyses a lipid X + a UDP-2-N,3-O-bis[(3R)-3-hydroxyacyl]-alpha-D-glucosamine = a lipid A disaccharide + UDP + H(+). Its pathway is bacterial outer membrane biogenesis; LPS lipid A biosynthesis. Functionally, condensation of UDP-2,3-diacylglucosamine and 2,3-diacylglucosamine-1-phosphate to form lipid A disaccharide, a precursor of lipid A, a phosphorylated glycolipid that anchors the lipopolysaccharide to the outer membrane of the cell. In Anaeromyxobacter dehalogenans (strain 2CP-1 / ATCC BAA-258), this protein is Lipid-A-disaccharide synthase.